The sequence spans 234 residues: MSSQPNHQTSISSLLHDRLHIPPAETIVEKESAEKDTCQSQRKRKEPVLHEVDGSSSGAAKKQDHNAKERLRRMRLHASYLTLGTLLPDHSSSSSKKKWSAPSIIDNVITYIPKLQNEVGELTLRKQKLVELERRGPSIRAISVLELGESGYEAVVQICLKKENEDEFSNLLHVMEVQGLSVLSASTSQVCREQRVVCYNFHVKMDEKPCEGDDYITVLKNNIISSLRDNTKCK.

A compositionally biased stretch (polar residues) spans 1 to 13 (MSSQPNHQTSISS). A disordered region spans residues 1-67 (MSSQPNHQTS…GAAKKQDHNA (67 aa)). A compositionally biased stretch (basic and acidic residues) spans 27 to 37 (IVEKESAEKDT). One can recognise a bHLH domain in the interval 60-115 (AKKQDHNAKERLRRMRLHASYLTLGTLLPDHSSSSSKKKWSAPSIIDNVITYIPKL).

The protein belongs to the bHLH protein family.

The protein localises to the nucleus. In Arabidopsis thaliana (Mouse-ear cress), this protein is Transcription factor bHLH160.